The primary structure comprises 360 residues: 3-dehydroquinate synthase (360 aa).

Residues D71 to K76, G105 to D109, T129 to T130, K142, K151, and C169 to T172 contribute to the NAD(+) site. The Zn(2+) site is built by E184, H247, and H264.

Belongs to the sugar phosphate cyclases superfamily. Dehydroquinate synthase family. Requires Co(2+) as cofactor. The cofactor is Zn(2+). NAD(+) is required as a cofactor.

It is found in the cytoplasm. It carries out the reaction 7-phospho-2-dehydro-3-deoxy-D-arabino-heptonate = 3-dehydroquinate + phosphate. Its pathway is metabolic intermediate biosynthesis; chorismate biosynthesis; chorismate from D-erythrose 4-phosphate and phosphoenolpyruvate: step 2/7. Functionally, catalyzes the conversion of 3-deoxy-D-arabino-heptulosonate 7-phosphate (DAHP) to dehydroquinate (DHQ). The chain is 3-dehydroquinate synthase from Erwinia tasmaniensis (strain DSM 17950 / CFBP 7177 / CIP 109463 / NCPPB 4357 / Et1/99).